The following is a 70-amino-acid chain: U2-agatoxin-Ao1q (70 aa).

The signal sequence occupies residues 1-20; it reads MRSIISLLLISAMVFSMIAA. The propeptide occupies 21–34; sequence VPEEEGLQLSEDER. 2 cysteine pairs are disulfide-bonded: Cys-44–Cys-58 and Cys-52–Cys-68. Leu-69 carries the leucine amide modification.

Belongs to the neurotoxin 01 (U2-agtx) family. Does not contain a cysteine at position 53 which disrupts the cysteine framework. As to expression, expressed by the venom gland.

The protein resides in the secreted. Functionally, insect active toxin causing rapid but reversible paralysis in crickets. No activity shown in mammals. Does not show effect on mammalian voltage-gated calcium channels. The polypeptide is U2-agatoxin-Ao1q (Agelena orientalis (Funnel-web spider)).